A 199-amino-acid chain; its full sequence is MTKVKICGLSTKEAVETAVSAGADYIGFVFAPSKRQVTLEEAAVLAKLIPADVKKVGVFVSPSRVELLEAIDKVGLDLVQVHGQVADDLFENLPCASIQAVQVDGNGHVPNSQADYLLFDAPVAGSGQPFDWGQLDTTGLAQPFFIAGGLNEDNVVKAIQHFTPYAVDVSSGVETDGQKDHEKIRRFIERVKHGISGTK.

Belongs to the TrpF family.

The catalysed reaction is N-(5-phospho-beta-D-ribosyl)anthranilate = 1-(2-carboxyphenylamino)-1-deoxy-D-ribulose 5-phosphate. It participates in amino-acid biosynthesis; L-tryptophan biosynthesis; L-tryptophan from chorismate: step 3/5. This Streptococcus pneumoniae serotype 19F (strain G54) protein is N-(5'-phosphoribosyl)anthranilate isomerase.